Here is a 326-residue protein sequence, read N- to C-terminus: AA9 family lytic polysaccharide monooxygenase B (326 aa).

The N-terminal stretch at 1–19 is a signal peptide; that stretch reads MKSFTIAALAALWAQEAAA. Cu(2+)-binding residues include histidine 20 and histidine 98. Cysteine 57 and cysteine 192 are joined by a disulfide. The O2 site is built by histidine 178 and glutamine 187. A Cu(2+)-binding site is contributed by tyrosine 189. Residues 265–281 show a composition bias toward low complexity; sequence PSATLTQPTSTATATSA. Positions 265-286 are disordered; it reads PSATLTQPTSTATATSAPGGGG. The region spanning 289 to 326 is the CBM1 domain; that stretch reads CTAAKYQQCGGTGYTGCTTCASGSTCSAVSPPYYSQCL.

This sequence belongs to the polysaccharide monooxygenase AA9 family. Cu(2+) is required as a cofactor.

It is found in the secreted. The enzyme catalyses [(1-&gt;4)-beta-D-glucosyl]n+m + reduced acceptor + O2 = 4-dehydro-beta-D-glucosyl-[(1-&gt;4)-beta-D-glucosyl]n-1 + [(1-&gt;4)-beta-D-glucosyl]m + acceptor + H2O.. Functionally, lytic polysaccharide monooxygenase (LPMO) that depolymerizes crystalline and amorphous polysaccharides via the oxidation of scissile alpha- or beta-(1-4)-glycosidic bonds, yielding C1 and C4 oxidation products. Catalysis by LPMOs requires the reduction of the active-site copper from Cu(II) to Cu(I) by a reducing agent and H(2)O(2) or O(2) as a cosubstrate. Shows no activity on wheat arabinoxylan, konjac glucomannan, acetylated spruce galactoglucomannan, or cellopentaose. This Thermothielavioides terrestris (strain ATCC 38088 / NRRL 8126) (Thielavia terrestris) protein is AA9 family lytic polysaccharide monooxygenase B.